Reading from the N-terminus, the 303-residue chain is UDP-3-O-acyl-N-acetylglucosamine deacetylase (303 aa).

Residues histidine 78, histidine 237, and aspartate 241 each coordinate Zn(2+). Catalysis depends on histidine 264, which acts as the Proton donor.

Belongs to the LpxC family. Zn(2+) serves as cofactor.

It catalyses the reaction a UDP-3-O-[(3R)-3-hydroxyacyl]-N-acetyl-alpha-D-glucosamine + H2O = a UDP-3-O-[(3R)-3-hydroxyacyl]-alpha-D-glucosamine + acetate. Its pathway is glycolipid biosynthesis; lipid IV(A) biosynthesis; lipid IV(A) from (3R)-3-hydroxytetradecanoyl-[acyl-carrier-protein] and UDP-N-acetyl-alpha-D-glucosamine: step 2/6. Functionally, catalyzes the hydrolysis of UDP-3-O-myristoyl-N-acetylglucosamine to form UDP-3-O-myristoylglucosamine and acetate, the committed step in lipid A biosynthesis. In Coxiella burnetii (strain CbuG_Q212) (Coxiella burnetii (strain Q212)), this protein is UDP-3-O-acyl-N-acetylglucosamine deacetylase.